We begin with the raw amino-acid sequence, 332 residues long: Succinylglutamate desuccinylase (332 aa).

Residues histidine 59, glutamate 62, and histidine 151 each contribute to the Zn(2+) site. Residue glutamate 215 is part of the active site.

This sequence belongs to the AspA/AstE family. Succinylglutamate desuccinylase subfamily. Zn(2+) is required as a cofactor.

It catalyses the reaction N-succinyl-L-glutamate + H2O = L-glutamate + succinate. The protein operates within amino-acid degradation; L-arginine degradation via AST pathway; L-glutamate and succinate from L-arginine: step 5/5. Functionally, transforms N(2)-succinylglutamate into succinate and glutamate. This Pseudomonas aeruginosa (strain LESB58) protein is Succinylglutamate desuccinylase.